Consider the following 389-residue polypeptide: UDP-D-apiose/UDP-D-xylose synthase 2 (389 aa).

NAD(+) is bound by residues Phe28, Ile29, Asp49, Asn76, Ile77, and Leu96. UDP-alpha-D-glucuronate contacts are provided by Tyr105, Thr139, Glu141, Arg182, and Tyr185. Residues Tyr185 and Lys189 each coordinate NAD(+). Catalysis depends on Tyr185, which acts as the Proton acceptor. Asn214 serves as a coordination point for UDP-alpha-D-glucuronate. NAD(+) is bound by residues Trp215 and Arg235. Residues Lys251, Val253, Arg260, Tyr331, Tyr335, Asp337, and Arg341 each contribute to the UDP-alpha-D-glucuronate site.

It belongs to the NAD(P)-dependent epimerase/dehydratase family. Homodimer and heterodimer with AXS1. Requires NAD(+) as cofactor. Widely expressed with stronger expression in dark-grown seedlings, leaves and stems, and lower levels in flowers, siliques, pistils, pollen and roots.

The protein resides in the cytoplasm. The catalysed reaction is UDP-alpha-D-glucuronate + H(+) = UDP-alpha-D-xylose + CO2. The enzyme catalyses UDP-alpha-D-glucuronate + H(+) = UDP-alpha-D-apiose + CO2. In terms of biological role, together with AXS1, catalyzes the conversion of UDP-D-glucuronate into a mixture of UDP-D-apiose (UDP-Api) as the main product and UDP-D-xylose to a lesser extent, via a cycle of oxidation and reduction. D-Apiose (3-C-hydroxymethyl-d-erythrose) is the only plant cell wall monosaccharide with a branched carbon skeleton and is found in rhamnogalacturonan II (RG-II), apiogalacturonan, and several apioglycosides. The polypeptide is UDP-D-apiose/UDP-D-xylose synthase 2 (Arabidopsis thaliana (Mouse-ear cress)).